Here is a 424-residue protein sequence, read N- to C-terminus: Serine--tRNA ligase (424 aa).

231 to 233 is an L-serine binding site; it reads TAE. 262–264 serves as a coordination point for ATP; that stretch reads RSE. Glutamate 285 is an L-serine binding site. ATP is bound at residue 349–352; the sequence is EISS. Serine 385 contributes to the L-serine binding site.

The protein belongs to the class-II aminoacyl-tRNA synthetase family. Type-1 seryl-tRNA synthetase subfamily. In terms of assembly, homodimer. The tRNA molecule binds across the dimer.

The protein resides in the cytoplasm. The catalysed reaction is tRNA(Ser) + L-serine + ATP = L-seryl-tRNA(Ser) + AMP + diphosphate + H(+). It catalyses the reaction tRNA(Sec) + L-serine + ATP = L-seryl-tRNA(Sec) + AMP + diphosphate + H(+). Its pathway is aminoacyl-tRNA biosynthesis; selenocysteinyl-tRNA(Sec) biosynthesis; L-seryl-tRNA(Sec) from L-serine and tRNA(Sec): step 1/1. In terms of biological role, catalyzes the attachment of serine to tRNA(Ser). Is also able to aminoacylate tRNA(Sec) with serine, to form the misacylated tRNA L-seryl-tRNA(Sec), which will be further converted into selenocysteinyl-tRNA(Sec). This chain is Serine--tRNA ligase, found in Bacillus cereus (strain ATCC 10987 / NRS 248).